The primary structure comprises 772 residues: C-Maf-inducing protein (772 aa).

The PH domain maps to 52-160 (KLLQEGDIQV…WFHSLQWKKK (109 aa)). LRR repeat units follow at residues 662-683 (NLENLSLAFTNVTSACAEQLIK), 686-706 (SLKQLNLWSTQFGDAGLRVLS), 711-731 (TLQVLNLCETPVSDAGLLALS), and 735-755 (SLCNLNMNSTKLSADTYEDLK).

The protein resides in the nucleus. It localises to the cytoplasm. Its function is as follows. Plays a role in T-cell signaling pathway. The protein is C-Maf-inducing protein (cmip) of Xenopus laevis (African clawed frog).